The sequence spans 636 residues: Chaperone protein DnaK (636 aa).

Thr-197 is modified (phosphothreonine; by autocatalysis). The segment covering 596-607 (LYQQAQEQQQSG) has biased composition (low complexity). The interval 596–636 (LYQQAQEQQQSGSSGGSSDEDVVEDAEIVDEEDEEKRDDNR) is disordered. The segment covering 613–636 (SDEDVVEDAEIVDEEDEEKRDDNR) has biased composition (acidic residues).

This sequence belongs to the heat shock protein 70 family.

Acts as a chaperone. This chain is Chaperone protein DnaK, found in Rubrobacter xylanophilus (strain DSM 9941 / JCM 11954 / NBRC 16129 / PRD-1).